The chain runs to 240 residues: Dihydromonapterin reductase (240 aa).

Y152 functions as the Proton acceptor in the catalytic mechanism.

The protein belongs to the short-chain dehydrogenases/reductases (SDR) family. FolM subfamily.

The enzyme catalyses (6S)-5,6,7,8-tetrahydrofolate + NADP(+) = 7,8-dihydrofolate + NADPH + H(+). It carries out the reaction 7,8-dihydromonapterin + NADPH + H(+) = 5,6,7,8-tetrahydromonapterin + NADP(+). In terms of biological role, catalyzes the reduction of dihydromonapterin to tetrahydromonapterin. Also has lower activity with dihydrofolate. The protein is Dihydromonapterin reductase (folM) of Shigella flexneri serotype 5b (strain 8401).